A 602-amino-acid chain; its full sequence is Elongation factor 4 (602 aa).

The region spanning 7–188 is the tr-type G domain; that stretch reads ENIRNFSIIA…SIIRLVPPPK (182 aa). Residues 19–24 and 135–138 each bind GTP; these read DHGKST and NKID.

The protein belongs to the TRAFAC class translation factor GTPase superfamily. Classic translation factor GTPase family. LepA subfamily.

Its subcellular location is the cell inner membrane. It catalyses the reaction GTP + H2O = GDP + phosphate + H(+). Required for accurate and efficient protein synthesis under certain stress conditions. May act as a fidelity factor of the translation reaction, by catalyzing a one-codon backward translocation of tRNAs on improperly translocated ribosomes. Back-translocation proceeds from a post-translocation (POST) complex to a pre-translocation (PRE) complex, thus giving elongation factor G a second chance to translocate the tRNAs correctly. Binds to ribosomes in a GTP-dependent manner. The sequence is that of Elongation factor 4 from Chlamydia trachomatis serovar L2 (strain ATCC VR-902B / DSM 19102 / 434/Bu).